A 384-amino-acid polypeptide reads, in one-letter code: Deoxyguanosinetriphosphate triphosphohydrolase-like protein (384 aa).

One can recognise an HD domain in the interval 62–198 (RLTHSLEVST…AALADDISYI (137 aa)).

It belongs to the dGTPase family. Type 2 subfamily.

This is Deoxyguanosinetriphosphate triphosphohydrolase-like protein from Rickettsia rickettsii (strain Iowa).